Here is a 170-residue protein sequence, read N- to C-terminus: Transmembrane protein 217B (170 aa).

An N-terminal signal peptide occupies residues 1-21 (MNVRMFSLMVGIFSVLNTTQF). The Lumenal segment spans residues 22–58 (FIFDLNQKTHICYEAKFSIYVDSKSELVTWTLFHRAN). Residues 59-79 (ISTGLSLTTIIIGCFLFYCIH) form a helical membrane-spanning segment. Residues 80 to 85 (KNIYMG) lie on the Cytoplasmic side of the membrane. Residues 86-106 (LLIYAMWIITYELINFSIVLL) traverse the membrane as a helical segment. At 107–120 (LNGIIKDHFKTLSY) the chain is on the lumenal side. Residues 121-141 (LHWIFQISHMLLHFFCLPFIV) traverse the membrane as a helical segment. Topologically, residues 142-170 (KHAYNLYKESQTVGRKRRHRLCSTIAVNS) are cytoplasmic.

Its subcellular location is the membrane. The sequence is that of Transmembrane protein 217B from Homo sapiens (Human).